Reading from the N-terminus, the 451-residue chain is Phosphoglucosamine mutase (451 aa).

Serine 101 acts as the Phosphoserine intermediate in catalysis. Serine 101, aspartate 240, aspartate 242, and aspartate 244 together coordinate Mg(2+). Serine 101 bears the Phosphoserine mark.

It belongs to the phosphohexose mutase family. It depends on Mg(2+) as a cofactor. Post-translationally, activated by phosphorylation.

The enzyme catalyses alpha-D-glucosamine 1-phosphate = D-glucosamine 6-phosphate. Functionally, catalyzes the conversion of glucosamine-6-phosphate to glucosamine-1-phosphate. This chain is Phosphoglucosamine mutase, found in Streptococcus pyogenes serotype M3 (strain SSI-1).